A 629-amino-acid chain; its full sequence is tRNA uridine 5-carboxymethylaminomethyl modification enzyme MnmG (629 aa).

Position 13–18 (13–18 (GGGHAG)) interacts with FAD. 273 to 287 (GPRYCPSIEDKITRF) lines the NAD(+) pocket.

This sequence belongs to the MnmG family. In terms of assembly, homodimer. Heterotetramer of two MnmE and two MnmG subunits. It depends on FAD as a cofactor.

The protein localises to the cytoplasm. Its function is as follows. NAD-binding protein involved in the addition of a carboxymethylaminomethyl (cmnm) group at the wobble position (U34) of certain tRNAs, forming tRNA-cmnm(5)s(2)U34. This Colwellia psychrerythraea (strain 34H / ATCC BAA-681) (Vibrio psychroerythus) protein is tRNA uridine 5-carboxymethylaminomethyl modification enzyme MnmG.